Reading from the N-terminus, the 250-residue chain is 3-deoxy-manno-octulosonate cytidylyltransferase (250 aa).

Belongs to the KdsB family.

The protein resides in the cytoplasm. The enzyme catalyses 3-deoxy-alpha-D-manno-oct-2-ulosonate + CTP = CMP-3-deoxy-beta-D-manno-octulosonate + diphosphate. The protein operates within nucleotide-sugar biosynthesis; CMP-3-deoxy-D-manno-octulosonate biosynthesis; CMP-3-deoxy-D-manno-octulosonate from 3-deoxy-D-manno-octulosonate and CTP: step 1/1. Its pathway is bacterial outer membrane biogenesis; lipopolysaccharide biosynthesis. Activates KDO (a required 8-carbon sugar) for incorporation into bacterial lipopolysaccharide in Gram-negative bacteria. This chain is 3-deoxy-manno-octulosonate cytidylyltransferase, found in Actinobacillus pleuropneumoniae serotype 7 (strain AP76).